Consider the following 288-residue polypeptide: 4-hydroxy-tetrahydrodipicolinate synthase (288 aa).

Thr42 is a binding site for pyruvate. Tyr129 acts as the Proton donor/acceptor in catalysis. Lys157 acts as the Schiff-base intermediate with substrate in catalysis. Ile198 is a pyruvate binding site.

The protein belongs to the DapA family. In terms of assembly, homotetramer; dimer of dimers.

The protein localises to the cytoplasm. It catalyses the reaction L-aspartate 4-semialdehyde + pyruvate = (2S,4S)-4-hydroxy-2,3,4,5-tetrahydrodipicolinate + H2O + H(+). The protein operates within amino-acid biosynthesis; L-lysine biosynthesis via DAP pathway; (S)-tetrahydrodipicolinate from L-aspartate: step 3/4. Catalyzes the condensation of (S)-aspartate-beta-semialdehyde [(S)-ASA] and pyruvate to 4-hydroxy-tetrahydrodipicolinate (HTPA). The sequence is that of 4-hydroxy-tetrahydrodipicolinate synthase from Chlamydia abortus (strain DSM 27085 / S26/3) (Chlamydophila abortus).